A 194-amino-acid polypeptide reads, in one-letter code: Ribonuclease HII (194 aa).

An RNase H type-2 domain is found at 1–194; it reads MTVGVDEVGR…RLFPRDDGLR (194 aa). The a divalent metal cation site is built by aspartate 6, glutamate 7, and aspartate 102.

The protein belongs to the RNase HII family. Requires Mn(2+) as cofactor. It depends on Mg(2+) as a cofactor.

Its subcellular location is the cytoplasm. The enzyme catalyses Endonucleolytic cleavage to 5'-phosphomonoester.. In terms of biological role, endonuclease that specifically degrades the RNA of RNA-DNA hybrids. The polypeptide is Ribonuclease HII (Synechococcus sp. (strain WH7803)).